The following is a 132-amino-acid chain: MRRERYLEKIEYIVEALSEIPERVKTPIEVSGVFYNLLTSIESAMDISAMLVKDLGGRVEDDYSNVEMLKELGIIDEELAEGLKKCNGLRNWLVHRYNRVDKELVLSSVEEVKALLLKFIQRVEDVLEKIEP.

Catalysis depends on residues R90 and H95. Residues 90-97 (RNWLVHRY) carry the RX(4)HXY motif motif. Y97 bears the O-di-AMP-tyrosine mark.

The protein belongs to the HepT RNase toxin family. As to quaternary structure, homodimer, probably forms a complex with cognate antitoxin AF_2432. In terms of processing, modified by cognate antitoxin AF_2432; probably at least 2 successive AMPylation events occur on Tyr-97.

Its function is as follows. Probable toxic component of a putative type VII toxin-antitoxin (TA) system, probably an RNase. Probably neutralized by cognate antitoxin AF_2432. Neutralization may be due to AMPylation by AF_2432. The protein is Putative RNase AF_2433 of Archaeoglobus fulgidus (strain ATCC 49558 / DSM 4304 / JCM 9628 / NBRC 100126 / VC-16).